Here is a 189-residue protein sequence, read N- to C-terminus: MALLSRPALTLLLLLMAAVVRCQEQAQTTDWRATLKTIRNGVHKIDTYLNAALDLLGGEDGLCQYKCSDGSKPFPRYGYKPSPPNGCGSPLFGVHLNIGIPSLTKCCNQHDRCYETCGKSKNDCDEEFQYCLSKICRDVQKTLGLTQHVQACETTVELLFDSVIHLGCKPYLDSQRAACRCHYEEKTDL.

An N-terminal signal peptide occupies residues Met-1–Cys-22. The Ca(2+) site is built by Gly-88, Pro-90, and Phe-92. His-110 is a catalytic residue. Asp-111 serves as a coordination point for Ca(2+). Asp-125 is an active-site residue.

The cofactor is Ca(2+). In terms of tissue distribution, abundantly expressed in heart, skeletal muscle, kidney, liver and pancreas.

The protein resides in the secreted. Its subcellular location is the cytoplasm. The enzyme catalyses a 1,2-diacyl-sn-glycero-3-phosphocholine + H2O = a 1-acyl-sn-glycero-3-phosphocholine + a fatty acid + H(+). Its function is as follows. PA2 catalyzes the calcium-dependent hydrolysis of the 2-acyl groups in 3-sn-phosphoglycerides. Does not exhibit detectable activity toward sn-2-arachidonoyl- or linoleoyl-phosphatidylcholine or -phosphatidylethanolamine. The sequence is that of Group XIIA secretory phospholipase A2 (PLA2G12A) from Homo sapiens (Human).